A 283-amino-acid polypeptide reads, in one-letter code: Elongation factor Ts (283 aa).

The interval 80–83 is involved in Mg(2+) ion dislocation from EF-Tu; the sequence is TDFV.

Belongs to the EF-Ts family.

Its subcellular location is the cytoplasm. In terms of biological role, associates with the EF-Tu.GDP complex and induces the exchange of GDP to GTP. It remains bound to the aminoacyl-tRNA.EF-Tu.GTP complex up to the GTP hydrolysis stage on the ribosome. This chain is Elongation factor Ts, found in Actinobacillus pleuropneumoniae serotype 3 (strain JL03).